The chain runs to 131 residues: Large ribosomal subunit protein bL17 (131 aa).

Belongs to the bacterial ribosomal protein bL17 family. Part of the 50S ribosomal subunit. Contacts protein L32.

This Shewanella frigidimarina (strain NCIMB 400) protein is Large ribosomal subunit protein bL17.